The chain runs to 346 residues: PhoH-like protein (346 aa).

142-149 (GPAGTGKT) lines the ATP pocket.

This sequence belongs to the PhoH family.

Its subcellular location is the cytoplasm. The polypeptide is PhoH-like protein (ybeZ) (Escherichia coli O157:H7).